Reading from the N-terminus, the 161-residue chain is Large ribosomal subunit protein bL21m (161 aa).

The N-terminal 35 residues, M1–S35, are a transit peptide targeting the mitochondrion.

It belongs to the bacterial ribosomal protein bL21 family. Component of the mitochondrial large ribosomal subunit (mt-LSU). Mature yeast 74S mitochondrial ribosomes consist of a small (37S) and a large (54S) subunit. The 37S small subunit contains a 15S ribosomal RNA (15S mt-rRNA) and 34 different proteins. The 54S large subunit contains a 21S rRNA (21S mt-rRNA) and 46 different proteins.

It localises to the mitochondrion. In terms of biological role, component of the mitochondrial ribosome (mitoribosome), a dedicated translation machinery responsible for the synthesis of mitochondrial genome-encoded proteins, including at least some of the essential transmembrane subunits of the mitochondrial respiratory chain. The mitoribosomes are attached to the mitochondrial inner membrane and translation products are cotranslationally integrated into the membrane. This chain is Large ribosomal subunit protein bL21m (MRPL49), found in Saccharomyces cerevisiae (strain ATCC 204508 / S288c) (Baker's yeast).